We begin with the raw amino-acid sequence, 118 residues long: MAGVRQHGWRAIPAVCSEYGADTLPDRYRSDGRCLLFRQQAGISALKQELEVKTPYRAMNHPVIGVVTKADLASMEQISLVKSWLREAGAHNVLVTSAVNNNGVTELFALLHTEEGCC.

This is an uncharacterized protein from Escherichia coli (strain UTI89 / UPEC).